Reading from the N-terminus, the 383-residue chain is Succinyl-diaminopimelate desuccinylase (383 aa).

Residue His-73 coordinates Zn(2+). Asp-75 is a catalytic residue. Asp-107 serves as a coordination point for Zn(2+). The active-site Proton acceptor is the Glu-141. Residues Glu-142, Glu-170, and His-356 each coordinate Zn(2+).

Belongs to the peptidase M20A family. DapE subfamily. Homodimer. It depends on Zn(2+) as a cofactor. Co(2+) serves as cofactor.

The enzyme catalyses N-succinyl-(2S,6S)-2,6-diaminopimelate + H2O = (2S,6S)-2,6-diaminopimelate + succinate. It functions in the pathway amino-acid biosynthesis; L-lysine biosynthesis via DAP pathway; LL-2,6-diaminopimelate from (S)-tetrahydrodipicolinate (succinylase route): step 3/3. Functionally, catalyzes the hydrolysis of N-succinyl-L,L-diaminopimelic acid (SDAP), forming succinate and LL-2,6-diaminopimelate (DAP), an intermediate involved in the bacterial biosynthesis of lysine and meso-diaminopimelic acid, an essential component of bacterial cell walls. This Pseudomonas aeruginosa (strain UCBPP-PA14) protein is Succinyl-diaminopimelate desuccinylase.